Reading from the N-terminus, the 344-residue chain is Probable dual-specificity RNA methyltransferase RlmN (344 aa).

Residue Glu-90 is the Proton acceptor of the active site. The Radical SAM core domain occupies 96 to 326 (YKYGNAICIS…VTIRRELGSS (231 aa)). Cysteines 103 and 331 form a disulfide. Residues Cys-110, Cys-114, and Cys-117 each coordinate [4Fe-4S] cluster. S-adenosyl-L-methionine-binding positions include 157 to 158 (GE), Ser-189, 212 to 214 (SLH), and Asn-288. Residue Cys-331 is the S-methylcysteine intermediate of the active site.

This sequence belongs to the radical SAM superfamily. RlmN family. It depends on [4Fe-4S] cluster as a cofactor.

The protein localises to the cytoplasm. The enzyme catalyses adenosine(2503) in 23S rRNA + 2 reduced [2Fe-2S]-[ferredoxin] + 2 S-adenosyl-L-methionine = 2-methyladenosine(2503) in 23S rRNA + 5'-deoxyadenosine + L-methionine + 2 oxidized [2Fe-2S]-[ferredoxin] + S-adenosyl-L-homocysteine. The catalysed reaction is adenosine(37) in tRNA + 2 reduced [2Fe-2S]-[ferredoxin] + 2 S-adenosyl-L-methionine = 2-methyladenosine(37) in tRNA + 5'-deoxyadenosine + L-methionine + 2 oxidized [2Fe-2S]-[ferredoxin] + S-adenosyl-L-homocysteine. Specifically methylates position 2 of adenine 2503 in 23S rRNA and position 2 of adenine 37 in tRNAs. This is Probable dual-specificity RNA methyltransferase RlmN from Caldicellulosiruptor saccharolyticus (strain ATCC 43494 / DSM 8903 / Tp8T 6331).